The following is a 132-amino-acid chain: Ribosome-binding factor A (132 aa).

The protein belongs to the RbfA family. As to quaternary structure, monomer. Binds 30S ribosomal subunits, but not 50S ribosomal subunits or 70S ribosomes.

The protein localises to the cytoplasm. In terms of biological role, one of several proteins that assist in the late maturation steps of the functional core of the 30S ribosomal subunit. Associates with free 30S ribosomal subunits (but not with 30S subunits that are part of 70S ribosomes or polysomes). Required for efficient processing of 16S rRNA. May interact with the 5'-terminal helix region of 16S rRNA. This chain is Ribosome-binding factor A, found in Pseudomonas putida (strain W619).